Reading from the N-terminus, the 193-residue chain is MNVTKAEIAVSAVKPEQYPDGALPEFALAGRSNVGKSSFINKMINRKNLARTSSKPGKTQTLNFYLINESFYFVDVPGYGFARVSKKEREAWGKMMETYFTTREQLRAVVLIVDLRHPPTKDDVMMYEFLKHYQIPTIIIATKADKVPKGKWQKHLKVVRETLNIIEDDKLILFSAETGQGKEEAWAALERFL.

Residues 22–193 (ALPEFALAGR…EAWAALERFL (172 aa)) form the EngB-type G domain. Residues 30–37 (GRSNVGKS), 57–61 (GKTQT), 75–78 (DVPG), 142–145 (TKAD), and 174–176 (FSA) each bind GTP. Residues S37 and T59 each contribute to the Mg(2+) site.

Belongs to the TRAFAC class TrmE-Era-EngA-EngB-Septin-like GTPase superfamily. EngB GTPase family. Requires Mg(2+) as cofactor.

Functionally, necessary for normal cell division and for the maintenance of normal septation. This Geobacillus sp. (strain WCH70) protein is Probable GTP-binding protein EngB.